Consider the following 462-residue polypeptide: Putative E3 ubiquitin-protein ligase XBAT35 (462 aa).

ANK repeat units follow at residues 6–35 (SKGE…DLEW), 39–69 (EGKT…NVNA), and 75–104 (HAGT…NPLV). 2 disordered regions span residues 277-341 (HPPV…GKAS) and 356-402 (SSPS…EGER). A compositionally biased stretch (polar residues) spans 304 to 317 (SLHTTMSDPSNLNH). Over residues 319-341 (SIGQASSSSGPSSSTAPPSGKAS) the composition is skewed to low complexity. The RING-type zinc-finger motif lies at 411-450 (CAICLDAPSEAVCVPCGHVAGCMSCLKEIKSKNWGCPVCR).

The enzyme catalyses S-ubiquitinyl-[E2 ubiquitin-conjugating enzyme]-L-cysteine + [acceptor protein]-L-lysine = [E2 ubiquitin-conjugating enzyme]-L-cysteine + N(6)-ubiquitinyl-[acceptor protein]-L-lysine.. It functions in the pathway protein modification; protein ubiquitination. No E3 ubiquitin-protein ligase activity observed when associated with the E2 enzyme UBC8 in vitro. In Arabidopsis thaliana (Mouse-ear cress), this protein is Putative E3 ubiquitin-protein ligase XBAT35 (XBAT35).